The chain runs to 415 residues: Ribulose bisphosphate carboxylase large chain (415 aa).

Substrate is bound by residues Asn101 and Thr151. Residue Lys153 is the Proton acceptor of the active site. Lys155 provides a ligand contact to substrate. Lys179, Asp181, and Glu182 together coordinate Mg(2+). N6-carboxylysine is present on Lys179. His272 (proton acceptor) is an active-site residue. Substrate is bound by residues Arg273, His305, and Ser357.

Belongs to the RuBisCO large chain family. Type I subfamily. Heterohexadecamer of 8 large chains and 8 small chains; disulfide-linked. The disulfide link is formed within the large subunit homodimers. The cofactor is Mg(2+). The disulfide bond which can form in the large chain dimeric partners within the hexadecamer appears to be associated with oxidative stress and protein turnover.

Its subcellular location is the plastid. The protein localises to the chloroplast. The enzyme catalyses 2 (2R)-3-phosphoglycerate + 2 H(+) = D-ribulose 1,5-bisphosphate + CO2 + H2O. It carries out the reaction D-ribulose 1,5-bisphosphate + O2 = 2-phosphoglycolate + (2R)-3-phosphoglycerate + 2 H(+). In terms of biological role, ruBisCO catalyzes two reactions: the carboxylation of D-ribulose 1,5-bisphosphate, the primary event in carbon dioxide fixation, as well as the oxidative fragmentation of the pentose substrate in the photorespiration process. Both reactions occur simultaneously and in competition at the same active site. The chain is Ribulose bisphosphate carboxylase large chain from Cibotium barometz (Scythian lamb).